The following is a 519-amino-acid chain: MAVLSSVSSLIPFSYGATRLTSKASLASRTSGFNLSSRWNSTRNSPMLYLSRAVTNNSGTTEISDNETAPRTYSWPDNKRPRVCILGGGFGGLYTALRLESLVWPEDKKPQVVLVDQSERFVFKPMLYELLSGEVDVWEIAPRFSDLLTNTGIQFLRDRVKTLLPCDHLGVNGSEISVTGGTVLLESGFKIEYDWLVLALGAESKLDVVPGAMELAFPFYTLEDAIRVNEKLSKLERKNFKDGSAIKVAVVGCGYAGVELAATISERLQDRGIVQSINVSKNILTSAPDGNREAAMKVLTSRKVQLLLGYLVQSIKRASNLEEDEGYFLELQPAERGLESQIIEADIVLWTVGAKPLLTKLEPSGPNVLPLNARGQAETDETLRVKGHPRIFALGDSSSLRDSNGKILPTTAQVAFQEADFTGWNIWAAINNRPLLPFRFQNLGEMMTLGRYDAAISPSFIEGLTLEGPIGHAARKLAYLIRLPTDEHRFKVGISWFAKSAVDSIALLQSNLTKVLSGS.

The transit peptide at M1 to R52 directs the protein to the chloroplast and mitochondrion. FAD is bound at residue R82 to S118. I246 to N282 lines the NAD(+) pocket.

It belongs to the NADH dehydrogenase family. Requires FAD as cofactor. In terms of tissue distribution, flowers, roots, leaves and stems.

The protein localises to the mitochondrion. It localises to the mitochondrion inner membrane. It is found in the plastid. Its subcellular location is the chloroplast. The protein resides in the plastoglobule. It catalyses the reaction a quinone + NADH + H(+) = a quinol + NAD(+). The catalysed reaction is a ubiquinone + NADH + H(+) = a ubiquinol + NAD(+). It carries out the reaction demethylphylloquinone + NADPH + H(+) = demethylphylloquinol + NADP(+). Its activity is regulated as follows. Inhibited by dicumarol. Its function is as follows. Bifunctional oxidoreductase ables to act both on prenyl naphthoquinones and on prenyl benzoquinones. May serve a respiratory function. Involved in an electron flow toward the plastoglobule plastoquinone pool. Required for plastochromanol-8 accumulation and for phylloquinone (vitamin K1) production. Probably not directly involved in cyclic or chlororespiratory electron flows under standard growth conditions, but participates in the redox metabolism of plastoquinone-9 and the tocophrol recycling-intermediate alpha-tocopherol quinone. Catalyzes the penultimate step in the biosynthesis of vitamin K1. In Arabidopsis thaliana (Mouse-ear cress), this protein is Alternative NAD(P)H-ubiquinone oxidoreductase C1, chloroplastic/mitochondrial.